A 449-amino-acid polypeptide reads, in one-letter code: Serine--tRNA ligase (449 aa).

256–258 (TSE) lines the L-serine pocket. ATP is bound at residue 287–289 (RAE). Residue glutamate 310 participates in L-serine binding. 374–377 (EISS) is a binding site for ATP. Serine 410 serves as a coordination point for L-serine.

This sequence belongs to the class-II aminoacyl-tRNA synthetase family. Type-1 seryl-tRNA synthetase subfamily. In terms of assembly, homodimer. The tRNA molecule binds across the dimer.

It localises to the cytoplasm. The enzyme catalyses tRNA(Ser) + L-serine + ATP = L-seryl-tRNA(Ser) + AMP + diphosphate + H(+). It catalyses the reaction tRNA(Sec) + L-serine + ATP = L-seryl-tRNA(Sec) + AMP + diphosphate + H(+). It functions in the pathway aminoacyl-tRNA biosynthesis; selenocysteinyl-tRNA(Sec) biosynthesis; L-seryl-tRNA(Sec) from L-serine and tRNA(Sec): step 1/1. Its function is as follows. Catalyzes the attachment of serine to tRNA(Ser). Is also able to aminoacylate tRNA(Sec) with serine, to form the misacylated tRNA L-seryl-tRNA(Sec), which will be further converted into selenocysteinyl-tRNA(Sec). This is Serine--tRNA ligase from Xanthomonas oryzae pv. oryzae (strain MAFF 311018).